The following is a 704-amino-acid chain: Non-sulfated chondroitin lyase E66 (704 aa).

Residues methionine 1–serine 23 form the signal peptide. Residues asparagine 236 and histidine 291 each act as proton acceptor in the active site. Tyrosine 299 (proton donor) is an active-site residue.

The protein belongs to the baculoviridae E66 family.

The protein resides in the virion membrane. It is found in the host nucleus. Its subcellular location is the host cytoplasm. Component of the polyhedra envelope. Plays an essential role in oral infectivity. May digest, with its chondroitin lyase activity, the chondroitin sulfate barrier of the peritrophic matrix of the host midgut to facilitate viral infection in the epithelial cells. The sequence is that of Non-sulfated chondroitin lyase E66 (P79) from Lepidoptera (butterflies and moths).